A 540-amino-acid polypeptide reads, in one-letter code: O-phosphoserine--tRNA(Cys) ligase (540 aa).

Residues His-188–Thr-190, Ser-233–Ser-235, Tyr-275–Tyr-276, and Asn-319 each bind substrate.

This sequence belongs to the class-II aminoacyl-tRNA synthetase family. O-phosphoseryl-tRNA(Cys) synthetase subfamily. As to quaternary structure, homotetramer. Interacts with SepCysS.

It catalyses the reaction tRNA(Cys) + O-phospho-L-serine + ATP = O-phospho-L-seryl-tRNA(Cys) + AMP + diphosphate. Functionally, catalyzes the attachment of O-phosphoserine (Sep) to tRNA(Cys). The polypeptide is O-phosphoserine--tRNA(Cys) ligase (Methanococcus aeolicus (strain ATCC BAA-1280 / DSM 17508 / OCM 812 / Nankai-3)).